A 175-amino-acid polypeptide reads, in one-letter code: NAD(P)H-quinone oxidoreductase subunit J (175 aa).

This sequence belongs to the complex I 30 kDa subunit family. In terms of assembly, NDH-1 can be composed of about 15 different subunits; different subcomplexes with different compositions have been identified which probably have different functions.

It localises to the cellular thylakoid membrane. The enzyme catalyses a plastoquinone + NADH + (n+1) H(+)(in) = a plastoquinol + NAD(+) + n H(+)(out). It catalyses the reaction a plastoquinone + NADPH + (n+1) H(+)(in) = a plastoquinol + NADP(+) + n H(+)(out). NDH-1 shuttles electrons from an unknown electron donor, via FMN and iron-sulfur (Fe-S) centers, to quinones in the respiratory and/or the photosynthetic chain. The immediate electron acceptor for the enzyme in this species is believed to be plastoquinone. Couples the redox reaction to proton translocation, and thus conserves the redox energy in a proton gradient. Cyanobacterial NDH-1 also plays a role in inorganic carbon-concentration. This Nostoc sp. (strain PCC 7120 / SAG 25.82 / UTEX 2576) protein is NAD(P)H-quinone oxidoreductase subunit J.